Consider the following 4062-residue polypeptide: Transcription-associated protein 1 (4062 aa).

The interval 531 to 562 (LASEPSTSEDADESGGDPNKLPPPTKEGKKTS) is disordered. TPR repeat units follow at residues 1346–1379 (LDGV…LLDI) and 1677–1714 (RRSF…DDEE). A compositionally biased stretch (basic and acidic residues) spans 2659–2670 (VETEMKREEPEP). A disordered region spans residues 2659–2692 (VETEMKREEPEPMEVDEKDSQDDSKDAGEPKEKE). Residues 2671 to 2680 (MEVDEKDSQD) are compositionally biased toward acidic residues. Positions 2681–2692 (DSKDAGEPKEKE) are enriched in basic and acidic residues. The 612-residue stretch at 2800–3411 (LIEFISSKHE…FYHIREAVSV (612 aa)) folds into the FAT domain. A TPR 3 repeat occupies 2847 to 2880 (IETLESLGTLYNEISEFDQFAAIWERRAVFPDTM). Residues 3682–4046 (EPNFEIVIKG…DCVSLISRAK (365 aa)) form the PI3K/PI4K catalytic domain. The tract at residues 3688–3694 (VIKGGQV) is G-loop. The segment at 3902-3910 (NLTPMGPDQ) is catalytic loop. An activation loop region spans residues 3922 to 3950 (NPSYRFEIRGGRSLHDIQHFGHEVPFRLT). Residues 4031–4062 (AKLRKDDCVSLISRAKDSDNLARMPPTYHAWF) form the FATC domain.

Belongs to the PI3/PI4-kinase family. TRA1 subfamily. Interacts with histone acetyltransferase Tip60 homolog mys-1. Probably a component of a complex with histone acetyltransferase (HAT) activity, at least composed of mys-1 and trr-1. In terms of tissue distribution, expressed in germ cells and somatic cells.

The protein localises to the nucleus. Its subcellular location is the chromosome. Influences germ cell fate in hermaphrodites. Acts downstream of tra-2 and tra-3 and through the Tip60 histone acetyltransferase complex to regulate germ cell fate decisions. Required for spermatogenesis and embryonic development. Acts with tra-2 to promote expression of fog-3 and control male tail development. Involved in the negative regulation of vulval development. Involved in the positive regulation of transcription factor daf-16, probably acting by histone acetylation; thereby modulating stress resistance. Plays a role in acetylation of nucleosomal histone H4, probably acting as a component of the Tip60 histone acetyltransferase complex. This is Transcription-associated protein 1 from Caenorhabditis elegans.